Here is a 228-residue protein sequence, read N- to C-terminus: Woronin body membrane protein wscA (228 aa).

4 consecutive transmembrane segments (helical) span residues 89-109, 130-150, 162-182, and 185-205; these read MTLY…GILQ, LIVS…IAGA, AGFM…LAFA, and FLPE…IGTY.

The protein belongs to the peroxisomal membrane protein PXMP2/4 family. In terms of assembly, self-assembles into detergent-resistant oligomers and forms a complex with hexA assemblies.

The protein resides in the peroxisome membrane. The protein localises to the cell septum. Functionally, woronin sorting complex protein involved in both Woronin bodies (WB) formation and inherence. Localizes to large peroxisome membranes where it self-assembles into detergent-resistant oligomers that envelop hex-1 assemblies, producing asymmetrical nascent WBs. These structures are then delivered to the cell cortex, which permits partitioning of the nascent WB and WB inheritance. The sequence is that of Woronin body membrane protein wscA from Aspergillus fumigatus (strain ATCC MYA-4609 / CBS 101355 / FGSC A1100 / Af293) (Neosartorya fumigata).